Reading from the N-terminus, the 85-residue chain is Contulakin-Lt2 (85 aa).

A signal peptide spans 1–22 (MQMAYWVMVMMMVGITAPLSEG). The propeptide occupies 23–61 (RKLNDAIRGLVPNDLTPQLLQSLVSRRHRVFHLDNTYLK). C65 and C70 are joined by a disulfide. Positions 76-85 (RRRDLKKRNK) are excised as a propeptide.

This sequence belongs to the conotoxin C superfamily. In terms of tissue distribution, expressed by the venom duct.

The protein resides in the secreted. Functionally, acts as an agonist of neurotensin receptors. It binds to human neurotensin type 1 receptor (NTSR1), rat neurotensin types 1 and 2 receptors (NTSR1/NTSR2) and mouse neurotensin type 3 receptor (SORT1). This is Contulakin-Lt2 from Conus litteratus (Lettered cone).